We begin with the raw amino-acid sequence, 480 residues long: Ribulose bisphosphate carboxylase large chain (480 aa).

Positions 1-2 (MS) are excised as a propeptide. P3 is modified (N-acetylproline). K14 bears the N6,N6,N6-trimethyllysine mark. N123 and T173 together coordinate substrate. The active-site Proton acceptor is K175. K177 is a substrate binding site. K201, D203, and E204 together coordinate Mg(2+). K201 carries the post-translational modification N6-carboxylysine. The active-site Proton acceptor is the H294. 3 residues coordinate substrate: R295, H327, and S379.

The protein belongs to the RuBisCO large chain family. Type I subfamily. As to quaternary structure, heterohexadecamer of 8 large chains and 8 small chains; disulfide-linked. The disulfide link is formed within the large subunit homodimers. The cofactor is Mg(2+). Post-translationally, the disulfide bond which can form in the large chain dimeric partners within the hexadecamer appears to be associated with oxidative stress and protein turnover.

The protein resides in the plastid. Its subcellular location is the chloroplast. The catalysed reaction is 2 (2R)-3-phosphoglycerate + 2 H(+) = D-ribulose 1,5-bisphosphate + CO2 + H2O. The enzyme catalyses D-ribulose 1,5-bisphosphate + O2 = 2-phosphoglycolate + (2R)-3-phosphoglycerate + 2 H(+). In terms of biological role, ruBisCO catalyzes two reactions: the carboxylation of D-ribulose 1,5-bisphosphate, the primary event in carbon dioxide fixation, as well as the oxidative fragmentation of the pentose substrate in the photorespiration process. Both reactions occur simultaneously and in competition at the same active site. This chain is Ribulose bisphosphate carboxylase large chain, found in Basella alba (Malabar spinach).